A 304-amino-acid polypeptide reads, in one-letter code: uncharacterized protein (304 aa).

The span at 226–244 (SRNSESSRQSNLNSPNDSV) shows a compositional bias: polar residues. Residues 226 to 263 (SRNSESSRQSNLNSPNDSVKFNEFNKSNKSTKTNPNNI) are disordered. The segment covering 246-262 (FNEFNKSNKSTKTNPNN) has biased composition (low complexity).

This is an uncharacterized protein from Acanthamoeba polyphaga (Amoeba).